A 415-amino-acid polypeptide reads, in one-letter code: Gamma-glutamyl phosphate reductase (415 aa).

The protein belongs to the gamma-glutamyl phosphate reductase family.

The protein localises to the cytoplasm. It carries out the reaction L-glutamate 5-semialdehyde + phosphate + NADP(+) = L-glutamyl 5-phosphate + NADPH + H(+). It functions in the pathway amino-acid biosynthesis; L-proline biosynthesis; L-glutamate 5-semialdehyde from L-glutamate: step 2/2. Functionally, catalyzes the NADPH-dependent reduction of L-glutamate 5-phosphate into L-glutamate 5-semialdehyde and phosphate. The product spontaneously undergoes cyclization to form 1-pyrroline-5-carboxylate. This is Gamma-glutamyl phosphate reductase from Bacillus thuringiensis subsp. konkukian (strain 97-27).